We begin with the raw amino-acid sequence, 112 residues long: UPF0145 protein Acid_4599 (112 aa).

Belongs to the UPF0145 family.

The polypeptide is UPF0145 protein Acid_4599 (Solibacter usitatus (strain Ellin6076)).